A 349-amino-acid chain; its full sequence is Insulin gene enhancer protein ISL-1 (349 aa).

2 consecutive LIM zinc-binding domains span residues 17 to 70 (CVGC…CKRD) and 79 to 133 (CAKC…RADH). The homeobox DNA-binding region spans 181–240 (TTRVRTVLNEKQLHTLRTCYAANPRPDALMKEQLVEMTGLSPRVIRVWFQNKRCKDKKRS). Residues 262–291 (GTPMVAASPERHDGGLQANPVEVQSYQPPW) are LIM-binding domain (LID). A disordered region spans residues 312–349 (VNFSEGGPGSNSTGSEVASMSSQLPDTPNSMVASPIEA). Over residues 321–343 (SNSTGSEVASMSSQLPDTPNSMV) the composition is skewed to polar residues.

At neuronal promoters, displaces LDB1 from LHX3 LIM domain to form a ternary complex in which ISL1 contacts both LHX3 and LDB1; allosteric structural changes in the DNA binding domain of LHX3, induced by the ISL1:LHX3 interaction, may explain differences in sequence specificity of the different complexes. Interacts with LHX3. Interacts (via C-terminus) with POU4F2 (via C-terminus) isoform 1. Interacts with POU3F2. Interacts with POU4F3. Interacts (via N-terminal domain) with MLIP; the interaction represses ISL1 transactivator activity. Interacts with GCN5/KAT2A. Interactions of ISL1 with MLIP1 or KAT2A may be mutually exclusive. In terms of processing, ubiquitinated probably by WWP1 E3 ubiquitin ligase; ubiquitination is followed by protein degradation. Phosphorylated. In terms of tissue distribution, expressed in subsets of neurons of the adrenal medulla and dorsal root ganglion, inner nuclear and ganglion cell layers in the retina, the pineal and some regions of the brain.

It localises to the nucleus. Its function is as follows. DNA-binding transcriptional activator. Recognizes and binds to the consensus octamer binding site 5'-ATAATTAA-3' in promoter of target genes. Plays a fundamental role in the gene regulatory network essential for retinal ganglion cell (RGC) differentiation. Cooperates with the transcription factor POU4F2 to achieve maximal levels of expression of RGC target genes and RGC fate specification in the developing retina. Involved in the specification of motor neurons in cooperation with LHX3 and LDB1. Binds to insulin gene enhancer sequences. Essential for heart development. Marker of one progenitor cell population that give rise to the outflow tract, right ventricle, a subset of left ventricular cells, and a large number of atrial cells as well, its function is required for these progenitors to contribute to the heart. Controls the expression of FGF and BMP growth factors in this cell population and is required for proliferation and survival of cells within pharyngeal foregut endoderm and adjacent splanchnic mesoderm as well as for migration of cardiac progenitors into the heart. The polypeptide is Insulin gene enhancer protein ISL-1 (ISL1) (Homo sapiens (Human)).